A 299-amino-acid chain; its full sequence is Pyridoxal 5'-phosphate synthase subunit PdxS (299 aa).

D24 contributes to the D-ribose 5-phosphate binding site. The Schiff-base intermediate with D-ribose 5-phosphate role is filled by K81. G153 is a D-ribose 5-phosphate binding site. Position 165 (R165) interacts with D-glyceraldehyde 3-phosphate. D-ribose 5-phosphate is bound by residues G219 and 240-241 (GS).

It belongs to the PdxS/SNZ family. In terms of assembly, in the presence of PdxT, forms a dodecamer of heterodimers.

It carries out the reaction aldehydo-D-ribose 5-phosphate + D-glyceraldehyde 3-phosphate + L-glutamine = pyridoxal 5'-phosphate + L-glutamate + phosphate + 3 H2O + H(+). It participates in cofactor biosynthesis; pyridoxal 5'-phosphate biosynthesis. Functionally, catalyzes the formation of pyridoxal 5'-phosphate from ribose 5-phosphate (RBP), glyceraldehyde 3-phosphate (G3P) and ammonia. The ammonia is provided by the PdxT subunit. Can also use ribulose 5-phosphate and dihydroxyacetone phosphate as substrates, resulting from enzyme-catalyzed isomerization of RBP and G3P, respectively. This Methanococcus aeolicus (strain ATCC BAA-1280 / DSM 17508 / OCM 812 / Nankai-3) protein is Pyridoxal 5'-phosphate synthase subunit PdxS.